Reading from the N-terminus, the 859-residue chain is MCAGFYVAVHPWLEAQSLHKVGHTGNLAARLHDGSYTTCFTDEWKYCFTLETSTKKDAQKIEAGVLYCAQFFRVKNKELVCLLPEKIKQLAEDVANCLDISYTLCDSPTYEMNDSTIVVEPSLPSDPLISKEKLRHLVITPVEDEEHFADDVLFFSTDETRTAIEDRLYQKEAANMGYQELRRSGRAILQMACRCGKTRVAYLILSNYLQGKVLYLVPGLSLLRQTLEKLYQYGISLKNVLLVGSDQTRIVLNHDNIEMTTNPVFIAKRIREAPSLLVIATYQSSTLLVDDFDLIISDECHRICGEWETRPFTHVLLNFKKGHRLFLTATPRYDTPLSMKNRELFGGVAFRYYLREGIEAGYVNDFELQMVAAPKLAHQPSNREETTKQIIVKQIIMALAYLKTNIPAPKMLVFTRDIKQARELYAELVDQGVYALIAHSTLPRQVILKTFTEFCSSKEPVILLNCRLFQEGVEVPELNAVFFAAPRHSPRDIIQSICRPLNKQVQKPHATIFLPLEVNTENVCLDRFSSIIPFADALASEDPRFYEHLLNPSEVAYPINWIGAHGSVSELLQLARHAIRYGTQGKIDRLTRSERLPWKAAFAELKRTVEICCRYPKINDGFHFGGATLRFDTWYKWVIKSYLQYKNKEPSSLEPYQVSDLESLQDWTTRGVGGPYPWEESMAFLETWLAQNKGELVAIDIHQGGWIGLDATPMERLSGVLTTVSQRDGRSYGKNKKLRPKKGFMIPPQQAEDLDRIFGKHNLKWRKDRVNGFLKEDEHGNYTGEPTCIQEAYRTFKEYVKTNPEYIEKYWPGYAKGKHKHQELPHIWESGLAPPRYKAFKDGNKQLIQRSPKKKDIKN.

The Helicase ATP-binding domain occupies Tyr178 to Ala349. Met191–Thr198 contacts ATP. The short motif at Asp298 to His301 is the DEAH box element. Positions Gln394–Ser553 constitute a Helicase C-terminal domain.

This sequence belongs to the asfivirus helicase A859L family.

The sequence is that of Probable helicase A859L from Ornithodoros (relapsing fever ticks).